We begin with the raw amino-acid sequence, 425 residues long: Perilipin-2 (425 aa).

Ala-2 carries the N-acetylalanine modification. Residue Ser-213 is modified to Phosphoserine. Tyr-230 is modified (phosphotyrosine).

This sequence belongs to the perilipin family. As to quaternary structure, interacts with IRGC. In terms of processing, acylated; primarily with C14, C16 and C18 fatty acids. Phosphorylation at Tyr-230 by isoform 1 of CHKA (CHKalpha2) promotes dissociation from lipid droplets: dissociation is followed by recruitment of autophagosome machinery to lipid droplets and subsequent lipid droplet lipolysis. Post-translationally, polyubiquitination of Nt-acetylatable A-PLIN2 by MARCHF6 lead to degradation by 26S proteasomes. As to expression, adipose tissue specific. Expressed abundantly and preferentially in fat pads.

Its subcellular location is the membrane. The protein resides in the lipid droplet. Functionally, structural component of lipid droplets, which is required for the formation and maintenance of lipid storage droplets. The chain is Perilipin-2 from Mus musculus (Mouse).